The primary structure comprises 65 residues: Large ribosomal subunit protein bL35 (65 aa).

2 stretches are compositionally biased toward basic residues: residues 1 to 15 and 26 to 44; these read MPKM…KRFT and QAFK…KRQL. Residues 1 to 65 are disordered; that stretch reads MPKMKTKKSA…KSVRAMMPYA (65 aa).

Belongs to the bacterial ribosomal protein bL35 family.

This Cupriavidus metallidurans (strain ATCC 43123 / DSM 2839 / NBRC 102507 / CH34) (Ralstonia metallidurans) protein is Large ribosomal subunit protein bL35.